Reading from the N-terminus, the 308-residue chain is Thymidylate synthase (308 aa).

Residues arginine 26 and 170-171 contribute to the dUMP site; that span reads RR. Cysteine 190 acts as the Nucleophile in catalysis. Residues 210 to 213, asparagine 221, and 251 to 253 contribute to the dUMP site; these read RSCD and HVY. Aspartate 213 is a binding site for (6R)-5,10-methylene-5,6,7,8-tetrahydrofolate. Alanine 307 provides a ligand contact to (6R)-5,10-methylene-5,6,7,8-tetrahydrofolate.

This sequence belongs to the thymidylate synthase family. Bacterial-type ThyA subfamily. Homodimer.

Its subcellular location is the cytoplasm. The enzyme catalyses dUMP + (6R)-5,10-methylene-5,6,7,8-tetrahydrofolate = 7,8-dihydrofolate + dTMP. It participates in pyrimidine metabolism; dTTP biosynthesis. Catalyzes the reductive methylation of 2'-deoxyuridine-5'-monophosphate (dUMP) to 2'-deoxythymidine-5'-monophosphate (dTMP) while utilizing 5,10-methylenetetrahydrofolate (mTHF) as the methyl donor and reductant in the reaction, yielding dihydrofolate (DHF) as a by-product. This enzymatic reaction provides an intracellular de novo source of dTMP, an essential precursor for DNA biosynthesis. This Rhizorhabdus wittichii (strain DSM 6014 / CCUG 31198 / JCM 15750 / NBRC 105917 / EY 4224 / RW1) (Sphingomonas wittichii) protein is Thymidylate synthase.